The sequence spans 194 residues: uncharacterized protein (194 aa).

An N-terminal signal peptide occupies residues 1-20 (MLYKFTVLLLIYSYLRNLQA). Asparagine 31, asparagine 72, asparagine 133, and asparagine 157 each carry an N-linked (GlcNAc...) asparagine; by host glycan.

This is an uncharacterized protein from Ostreid herpesvirus 1 (isolate France) (OsHV-1).